A 328-amino-acid polypeptide reads, in one-letter code: Malate dehydrogenase (328 aa).

NAD(+) is bound at residue 13–19 (GGKGQIA). Substrate-binding residues include Arg-94 and Arg-100. NAD(+) contacts are provided by residues Asn-107, Gln-114, and 131–133 (VGN). Substrate-binding residues include Asn-133 and Arg-164. His-189 serves as the catalytic Proton acceptor.

The protein belongs to the LDH/MDH superfamily. MDH type 2 family.

It catalyses the reaction (S)-malate + NAD(+) = oxaloacetate + NADH + H(+). In terms of biological role, catalyzes the reversible oxidation of malate to oxaloacetate. The protein is Malate dehydrogenase of Chlamydia pneumoniae (Chlamydophila pneumoniae).